Consider the following 223-residue polypeptide: Ribonuclease 3 (223 aa).

The RNase III domain maps to 3 to 125 (LERLQKKLSY…IIAAIYLDAG (123 aa)). Glutamate 38 is a binding site for Mg(2+). The active site involves aspartate 42. Mg(2+) contacts are provided by aspartate 111 and glutamate 114. Residue glutamate 114 is part of the active site. In terms of domain architecture, DRBM spans 152-222 (DPKTRLQEFL…AEQVLAKLTT (71 aa)).

The protein belongs to the ribonuclease III family. In terms of assembly, homodimer. Mg(2+) is required as a cofactor.

It localises to the cytoplasm. The catalysed reaction is Endonucleolytic cleavage to 5'-phosphomonoester.. Its function is as follows. Digests double-stranded RNA. Involved in the processing of primary rRNA transcript to yield the immediate precursors to the large and small rRNAs (23S and 16S). Processes some mRNAs, and tRNAs when they are encoded in the rRNA operon. Processes pre-crRNA and tracrRNA of type II CRISPR loci if present in the organism. In Actinobacillus pleuropneumoniae serotype 5b (strain L20), this protein is Ribonuclease 3.